Here is a 158-residue protein sequence, read N- to C-terminus: SsrA-binding protein (158 aa).

The protein belongs to the SmpB family.

The protein localises to the cytoplasm. Its function is as follows. Required for rescue of stalled ribosomes mediated by trans-translation. Binds to transfer-messenger RNA (tmRNA), required for stable association of tmRNA with ribosomes. tmRNA and SmpB together mimic tRNA shape, replacing the anticodon stem-loop with SmpB. tmRNA is encoded by the ssrA gene; the 2 termini fold to resemble tRNA(Ala) and it encodes a 'tag peptide', a short internal open reading frame. During trans-translation Ala-aminoacylated tmRNA acts like a tRNA, entering the A-site of stalled ribosomes, displacing the stalled mRNA. The ribosome then switches to translate the ORF on the tmRNA; the nascent peptide is terminated with the 'tag peptide' encoded by the tmRNA and targeted for degradation. The ribosome is freed to recommence translation, which seems to be the essential function of trans-translation. In Parafrankia sp. (strain EAN1pec), this protein is SsrA-binding protein.